Reading from the N-terminus, the 551-residue chain is Eukaryotic translation initiation factor 3 subunit D-2 (551 aa).

The disordered stretch occupies residues 108–152 (RTRGRTGRGTPNIASLGGSTAGGATASSTKYGKGRHTRNTQNVGR). Low complexity predominate over residues 115–136 (RGTPNIASLGGSTAGGATASST). The RNA gate stretch occupies residues 290–304 (QFDLLTVNETSVEPP). Residues 527 to 551 (PENAFDSDRDEEEESSEPLSNSNDN) are disordered.

It belongs to the eIF-3 subunit D family. As to quaternary structure, component of the eukaryotic translation initiation factor 3 (eIF-3) complex. The eIF-3 complex interacts with pix.

It localises to the cytoplasm. Functionally, mRNA cap-binding component of the eukaryotic translation initiation factor 3 (eIF-3) complex, which is involved in protein synthesis of a specialized repertoire of mRNAs and, together with other initiation factors, stimulates binding of mRNA and methionyl-tRNAi to the 40S ribosome. The eIF-3 complex specifically targets and initiates translation of a subset of mRNAs involved in cell proliferation. In the eIF-3 complex, eif3d specifically recognizes and binds the 7-methylguanosine cap of a subset of mRNAs. This chain is Eukaryotic translation initiation factor 3 subunit D-2, found in Drosophila simulans (Fruit fly).